The sequence spans 295 residues: Nucleotide-binding protein MCA0739 (295 aa).

8 to 15 (GFSGSGKS) is a binding site for ATP. 60–63 (DARN) contributes to the GTP binding site.

The protein belongs to the RapZ-like family.

In terms of biological role, displays ATPase and GTPase activities. The polypeptide is Nucleotide-binding protein MCA0739 (Methylococcus capsulatus (strain ATCC 33009 / NCIMB 11132 / Bath)).